The chain runs to 217 residues: GTP cyclohydrolase 1 (217 aa).

Positions 108, 111, and 179 each coordinate Zn(2+).

The protein belongs to the GTP cyclohydrolase I family. In terms of assembly, toroid-shaped homodecamer, composed of two pentamers of five dimers.

The catalysed reaction is GTP + H2O = 7,8-dihydroneopterin 3'-triphosphate + formate + H(+). It functions in the pathway cofactor biosynthesis; 7,8-dihydroneopterin triphosphate biosynthesis; 7,8-dihydroneopterin triphosphate from GTP: step 1/1. The polypeptide is GTP cyclohydrolase 1 (Shewanella denitrificans (strain OS217 / ATCC BAA-1090 / DSM 15013)).